The primary structure comprises 185 residues: Protein LURP-one-related 13 (185 aa).

Belongs to the LOR family.

Might be related to the phospholipid scramblase and tubby-like superfamily of membrane tethered transcription factors. In Arabidopsis thaliana (Mouse-ear cress), this protein is Protein LURP-one-related 13.